Consider the following 1239-residue polypeptide: Potassium channel subfamily T member 1 (1239 aa).

The interval 1–45 (MARAKLPRSPSEGKAGPGDTPAGSAAPEEPHGLSPLLPTRGGGSV) is disordered. Residues 1 to 93 (MARAKLPRSP…LFFIKNQRSS (93 aa)) lie on the Cytoplasmic side of the membrane. The chain crosses the membrane as a helical span at residues 94–126 (LRIRLFNFSLKLLTCLLYIVRVLLDNPDQGIGC). At 127 to 153 (WGCTKYNYTFNGSSSEFHWAPILWVER) the chain is on the extracellular side. Residues N133 and N137 are each glycosylated (N-linked (GlcNAc...) asparagine). Residues 154-178 (KMALWVIQVIVATISFLETMLLIYL) form a helical membrane-spanning segment. Residues 179-192 (SYKGNIWEQIFHVS) are Cytoplasmic-facing. The chain crosses the membrane as a helical span at residues 193–208 (FVLEMINTLPFIITVF). The Extracellular segment spans residues 209–215 (WPPLRNL). Residues 216–233 (FIPVFLNCWLAKHALENM) form a helical membrane-spanning segment. At 234–246 (INDFHRAILRTQS) the chain is on the cytoplasmic side. Residues 247 to 274 (AMFNQVLILFCTLLCLVFTGTCGIQHLE) traverse the membrane as a helical segment. The Extracellular segment spans residues 275-281 (RAGGNLN). Residues 282–302 (LLTSFYFCIVTFSTVGFGDVT) constitute an intramembrane region (pore-forming). The K(+) site is built by V296 and G297. Over 303 to 304 (PK) the chain is Extracellular. Residues 305-338 (IWPSQLLVVILICVTLVVLPLQFEELVYLWMERQ) traverse the membrane as a helical segment. At 339-1239 (KSGGNYSRHR…NPETRDETQL (901 aa)) the chain is on the cytoplasmic side. Residues 352-488 (EKHVVLCVSS…FHVKFADHVV (137 aa)) form the RCK N-terminal 1 domain. Residues L513, H516, S538, and N540 each contribute to the Na(+) site. The tract at residues 658-689 (QNTDCRPSQGGSGGGGGKLTLPTENGSGSRRP) is disordered. Residues C758 and C759 each coordinate Zn(2+). K(+) contacts are provided by R761 and K764. The Na(+) site is built by R761 and K764. Residues C766 and H768 each coordinate Zn(2+). Positions 769, 771, 777, and 778 each coordinate K(+). Y771 contributes to the Na(+) binding site. F779 contributes to the Na(+) binding site. The 141-residue stretch at 781–921 (NKLIIVSAET…QFRAKDSYSL (141 aa)) folds into the RCK N-terminal 2 domain. K(+) contacts are provided by S787, L818, D820, G842, and D865. 2 disordered regions span residues 1053 to 1081 (REAK…ADPV) and 1212 to 1239 (TSSS…ETQL). Residues 1213 to 1230 (SSSQSRKSSCSNKLSSCN) show a composition bias toward low complexity.

Belongs to the potassium channel family. Calcium-activated (TC 1.A.1.3) subfamily. KCa4.1/KCNT1 sub-subfamily. Homotetramer; which constitutes the Na(+)-activated K(+) channel. Interacts with KCNT2; these heterodimer channels differ from the homomers in their unitary conductance, kinetic behavior, subcellular localization, and response to activation of protein kinase C. Interacts (via C-terminus) with FMR1; this interaction alters gating properties of KCNT1. Interacts with CRBN via its cytoplasmic C-terminus. As to quaternary structure, does not interact with KCNT2. Post-translationally, phosphorylated by protein kinase C. Phosphorylation of the C-terminal domain increases channel activity. As to expression, detected in brain and brainstem, in vestibular and oculomotor nuclei, the medial nucleus of the trapezoid in the auditory system, in olfactory bulb, red nucleus, and deep cerebellar nuclei. Detected in thalamus, substantia nigra, and amygdala (at protein level). Highly expressed in the brain and kidney.

The protein resides in the cell membrane. It carries out the reaction K(+)(in) = K(+)(out). With respect to regulation, activated by high intracellular Na(+) level. In addition to activation by Na(+), is cooperatively activated by intracellular Cl(-) levels. Activated upon stimulation of G-protein coupled receptors, such as CHRM1 and GRIA1. Functionally, sodium-activated K(+) channel. Acts as an important mediator of neuronal membrane excitability. Contributes to the delayed outward currents. Regulates neuronal bursting in sensory neurons. Contributes to synaptic development and plasticity. The protein is Potassium channel subfamily T member 1 (Kcnt1) of Rattus norvegicus (Rat).